Consider the following 256-residue polypeptide: Trans-aconitate 2-methyltransferase (256 aa).

Belongs to the methyltransferase superfamily. Tam family.

It localises to the cytoplasm. It catalyses the reaction trans-aconitate + S-adenosyl-L-methionine = (E)-3-(methoxycarbonyl)pent-2-enedioate + S-adenosyl-L-homocysteine. Functionally, catalyzes the S-adenosylmethionine monomethyl esterification of trans-aconitate. This Afipia carboxidovorans (strain ATCC 49405 / DSM 1227 / KCTC 32145 / OM5) (Oligotropha carboxidovorans) protein is Trans-aconitate 2-methyltransferase.